The sequence spans 226 residues: ATP synthase subunit a (226 aa).

Transmembrane regions (helical) follow at residues 17 to 37 (FSYF…AMMA), 79 to 99 (LVAT…LPGF), 105 to 125 (SLNL…FEGI), 134 to 154 (FAHF…IEIV), 176 to 196 (LFLM…AYVL), and 199 to 219 (FMAF…LAGA).

It belongs to the ATPase A chain family. As to quaternary structure, F-type ATPases have 2 components, CF(1) - the catalytic core - and CF(0) - the membrane proton channel. CF(1) has five subunits: alpha(3), beta(3), gamma(1), delta(1), epsilon(1). CF(0) has three main subunits: a(1), b(2) and c(9-12). The alpha and beta chains form an alternating ring which encloses part of the gamma chain. CF(1) is attached to CF(0) by a central stalk formed by the gamma and epsilon chains, while a peripheral stalk is formed by the delta and b chains.

The protein resides in the cell inner membrane. In terms of biological role, key component of the proton channel; it plays a direct role in the translocation of protons across the membrane. The polypeptide is ATP synthase subunit a (Campylobacter jejuni subsp. doylei (strain ATCC BAA-1458 / RM4099 / 269.97)).